A 109-amino-acid polypeptide reads, in one-letter code: Nucleoid-associated protein Caul_4574 (109 aa).

Belongs to the YbaB/EbfC family. Homodimer.

The protein localises to the cytoplasm. It is found in the nucleoid. Its function is as follows. Binds to DNA and alters its conformation. May be involved in regulation of gene expression, nucleoid organization and DNA protection. The sequence is that of Nucleoid-associated protein Caul_4574 from Caulobacter sp. (strain K31).